Here is a 56-residue protein sequence, read N- to C-terminus: Large ribosomal subunit protein bL32 (56 aa).

Residues 1–21 (MGVPQRRQSHARKNKRRSEWR) are disordered. A compositionally biased stretch (basic residues) spans 7–19 (RQSHARKNKRRSE).

Belongs to the bacterial ribosomal protein bL32 family.

The protein is Large ribosomal subunit protein bL32 of Syntrophomonas wolfei subsp. wolfei (strain DSM 2245B / Goettingen).